The sequence spans 108 residues: Putative membrane protein insertion efficiency factor (108 aa).

The protein belongs to the UPF0161 family.

The protein localises to the cell inner membrane. In terms of biological role, could be involved in insertion of integral membrane proteins into the membrane. The sequence is that of Putative membrane protein insertion efficiency factor from Chelativorans sp. (strain BNC1).